Reading from the N-terminus, the 352-residue chain is uncharacterized protein (352 aa).

The next 8 helical transmembrane spans lie at 6 to 26 (FIFL…IINP), 30 to 50 (FHIV…IINI), 76 to 96 (IFLT…FVII), 151 to 171 (EFII…LPFL), 197 to 217 (FILV…LPLI), 226 to 246 (VKVD…IEGL), 291 to 311 (WLPI…ASFA), and 330 to 350 (LIGG…AKIF).

This sequence belongs to the CitM (TC 2.A.11) transporter family.

It is found in the cell membrane. This is an uncharacterized protein from Methanocaldococcus jannaschii (strain ATCC 43067 / DSM 2661 / JAL-1 / JCM 10045 / NBRC 100440) (Methanococcus jannaschii).